Consider the following 85-residue polypeptide: uncharacterized protein (85 aa).

Residues 1–85 (MRWRPSSWSA…DQEQCGQHCR (85 aa)) form a disordered region. Residues 47-61 (ASVEGEGGRHADRHG) are compositionally biased toward basic and acidic residues.

This is an uncharacterized protein from Streptomyces lividans.